The sequence spans 417 residues: UDP-N-acetylglucosamine 1-carboxyvinyltransferase 3 (417 aa).

Position 22-23 (22-23 (KN)) interacts with phosphoenolpyruvate. Residue Arg92 coordinates UDP-N-acetyl-alpha-D-glucosamine. Cys116 serves as the catalytic Proton donor. Position 116 is a 2-(S-cysteinyl)pyruvic acid O-phosphothioketal (Cys116). UDP-N-acetyl-alpha-D-glucosamine-binding positions include 121–125 (RPIDQ), Asp304, and Ile326.

Belongs to the EPSP synthase family. MurA subfamily.

It localises to the cytoplasm. It catalyses the reaction phosphoenolpyruvate + UDP-N-acetyl-alpha-D-glucosamine = UDP-N-acetyl-3-O-(1-carboxyvinyl)-alpha-D-glucosamine + phosphate. The protein operates within cell wall biogenesis; peptidoglycan biosynthesis. Functionally, cell wall formation. Adds enolpyruvyl to UDP-N-acetylglucosamine. In Caldanaerobacter subterraneus subsp. tengcongensis (strain DSM 15242 / JCM 11007 / NBRC 100824 / MB4) (Thermoanaerobacter tengcongensis), this protein is UDP-N-acetylglucosamine 1-carboxyvinyltransferase 3.